Consider the following 560-residue polypeptide: Dihydroxy-acid dehydratase (560 aa).

C52 is a binding site for [2Fe-2S] cluster. D84 lines the Mg(2+) pocket. Residue C125 participates in [2Fe-2S] cluster binding. The Mg(2+) site is built by D126 and K127. K127 carries the post-translational modification N6-carboxylysine. C197 provides a ligand contact to [2Fe-2S] cluster. Residue E448 coordinates Mg(2+). S474 (proton acceptor) is an active-site residue.

This sequence belongs to the IlvD/Edd family. As to quaternary structure, homodimer. The cofactor is [2Fe-2S] cluster. It depends on Mg(2+) as a cofactor.

It catalyses the reaction (2R)-2,3-dihydroxy-3-methylbutanoate = 3-methyl-2-oxobutanoate + H2O. The enzyme catalyses (2R,3R)-2,3-dihydroxy-3-methylpentanoate = (S)-3-methyl-2-oxopentanoate + H2O. Its pathway is amino-acid biosynthesis; L-isoleucine biosynthesis; L-isoleucine from 2-oxobutanoate: step 3/4. It functions in the pathway amino-acid biosynthesis; L-valine biosynthesis; L-valine from pyruvate: step 3/4. Functionally, functions in the biosynthesis of branched-chain amino acids. Catalyzes the dehydration of (2R,3R)-2,3-dihydroxy-3-methylpentanoate (2,3-dihydroxy-3-methylvalerate) into 2-oxo-3-methylpentanoate (2-oxo-3-methylvalerate) and of (2R)-2,3-dihydroxy-3-methylbutanoate (2,3-dihydroxyisovalerate) into 2-oxo-3-methylbutanoate (2-oxoisovalerate), the penultimate precursor to L-isoleucine and L-valine, respectively. The polypeptide is Dihydroxy-acid dehydratase (Leptospira borgpetersenii serovar Hardjo-bovis (strain JB197)).